Consider the following 145-residue polypeptide: uncharacterized protein (145 aa).

It belongs to the SAP18 family.

Its subcellular location is the cytoplasm. The protein resides in the nucleus. This is an uncharacterized protein from Schizosaccharomyces pombe (strain 972 / ATCC 24843) (Fission yeast).